A 447-amino-acid polypeptide reads, in one-letter code: Protein cereblon (447 aa).

Composition is skewed to acidic residues over residues 1-10 and 25-34; these read MADDEGEEDP and ESEEEDEMEL. Residues 1 to 47 form a disordered region; that stretch reads MADDEGEEDPGINNMGNLLQVISSESEEEDEMELEDAKTADSESPNI. Positions 82 to 322 constitute a Lon N-terminal domain; it reads IPVLPHVQVM…CELDIMSKCT (241 aa). The 109-residue stretch at 321–429 folds into the CULT domain; sequence CTSLCCKHCP…LTRSALQPRI (109 aa). Zn(2+)-binding residues include C326 and C329. 2 residues coordinate (S)-thalidomide: W383 and W389. Zn(2+)-binding residues include C394 and C397.

It belongs to the CRBN family. As to quaternary structure, component of a DCX (DDB1-CUL4-X-box) protein ligase complex.

It localises to the cytoplasm. The protein resides in the nucleus. It participates in protein modification; protein ubiquitination. Functionally, substrate recognition component of a DCX (DDB1-CUL4-X-box) E3 protein ligase complex that mediates the ubiquitination and subsequent proteasomal degradation of target proteins, such as MEIS2. Normal degradation of key regulatory proteins is required for normal limb outgrowth and expression of the fibroblast growth factor FGF8. Maintains presynaptic glutamate release and consequently cognitive functions, such as memory and learning, by negatively regulating large-conductance calcium-activated potassium (BK) channels in excitatory neurons. Likely to function by regulating the assembly and neuronal surface expression of BK channels via its interaction with KCNT1. May also be involved in regulating anxiety-like behaviors via a BK channel-independent mechanism. The chain is Protein cereblon (crbn) from Xenopus tropicalis (Western clawed frog).